Consider the following 590-residue polypeptide: J protein JJJ1 (590 aa).

One can recognise a J domain in the interval 3 to 72 (TCYYELLGVE…RAWYDSHKEQ (70 aa)). The segment covering 269-284 (EQRKLKEQQRKNELNN) has biased composition (basic and acidic residues). Positions 269–293 (EQRKLKEQQRKNELNNRRKFGNDNN) are disordered. The C2H2-type 1 zinc-finger motif lies at 338–362 (YECFICNKTFKSEKQLKNHINTKLH). Ser393 carries the post-translational modification Phosphoserine. The segment at 441-546 (EVEDVSSDEN…TLPSSMSPTS (106 aa)) is disordered. Residues 455 to 467 (TKNKKKRKKKKKA) show a composition bias toward basic residues. A compositionally biased stretch (basic and acidic residues) spans 480 to 489 (DDTKDKRSNE). Thr504 bears the Phosphothreonine mark. Over residues 513-527 (KAKKKKGKQPKKNSK) the composition is skewed to basic residues. Residues 528–546 (STKSTPSLSTLPSSMSPTS) are compositionally biased toward low complexity. The C2H2-type 2 zinc finger occupies 549–573 (EVCTTCGESFDSRNKLFNHVKIAGH).

It is found in the nucleus. This Saccharomyces cerevisiae (strain ATCC 204508 / S288c) (Baker's yeast) protein is J protein JJJ1 (JJJ1).